The chain runs to 373 residues: Autophagy-related protein 18 (373 aa).

The segment at 142 to 163 is disordered; sequence YPDSRDHEPRTEGESSSPNVSN. A compositionally biased stretch (basic and acidic residues) spans 144–154; that stretch reads DSRDHEPRTEG. WD repeat units lie at residues 144–183, 186–226, and 231–270; these read DSRD…QITK, AHKD…RLYQ, and SLPA…SNLE. Positions 227-231 match the L/FRRG motif motif; it reads FRRGS.

Belongs to the WD repeat PROPPIN family. In terms of assembly, component of the PI(3,5)P2 regulatory complex. Interacts with atg5.

It localises to the preautophagosomal structure membrane. The protein resides in the vacuole membrane. It is found in the endosome membrane. In terms of biological role, the PI(3,5)P2 regulatory complex regulates both the synthesis and turnover of phosphatidylinositol 3,5-bisphosphate (PtdIns(3,5)P2). Necessary for proper vacuole morphology. Plays an important role in osmotically-induced vacuole fragmentation. Required for cytoplasm to vacuole transport (Cvt) vesicle formation, pexophagy and starvation-induced autophagy. Involved in correct atg9 trafficking to the preautophagosomal structure. Might also be involved in premeiotic DNA replication. Required for the recruitment of the atg5-atg12/atg16 complex to the preautophagosomal structure. The polypeptide is Autophagy-related protein 18 (atg18) (Schizosaccharomyces pombe (strain 972 / ATCC 24843) (Fission yeast)).